Reading from the N-terminus, the 320-residue chain is Cytochrome f (320 aa).

Positions 1 to 35 (MEKRNTYDWVTRWVIASFSILTISYMITWTSISNA) are cleaved as a signal peptide. Heme is bound by residues tyrosine 36, cysteine 56, cysteine 59, and histidine 60. The helical transmembrane segment at 286–306 (IQGLLVFLASVVLAQIFLVLK) threads the bilayer.

It belongs to the cytochrome f family. As to quaternary structure, the 4 large subunits of the cytochrome b6-f complex are cytochrome b6, subunit IV (17 kDa polypeptide, petD), cytochrome f and the Rieske protein, while the 4 small subunits are PetG, PetL, PetM and PetN. The complex functions as a dimer. It depends on heme as a cofactor.

The protein localises to the plastid. It is found in the chloroplast thylakoid membrane. In terms of biological role, component of the cytochrome b6-f complex, which mediates electron transfer between photosystem II (PSII) and photosystem I (PSI), cyclic electron flow around PSI, and state transitions. This is Cytochrome f from Welwitschia mirabilis (Tree tumbo).